The sequence spans 127 residues: S-adenosylmethionine decarboxylase proenzyme (127 aa).

Ser-63 functions as the Schiff-base intermediate with substrate; via pyruvic acid in the catalytic mechanism. Position 63 is a pyruvic acid (Ser); by autocatalysis (Ser-63). His-68 serves as the catalytic Proton acceptor; for processing activity. The active-site Proton donor; for catalytic activity is the Cys-83.

This sequence belongs to the prokaryotic AdoMetDC family. Type 1 subfamily. In terms of assembly, heterotetramer of two alpha and two beta chains arranged as a dimer of alpha/beta heterodimers. Pyruvate serves as cofactor. In terms of processing, is synthesized initially as an inactive proenzyme. Formation of the active enzyme involves a self-maturation process in which the active site pyruvoyl group is generated from an internal serine residue via an autocatalytic post-translational modification. Two non-identical subunits are generated from the proenzyme in this reaction, and the pyruvate is formed at the N-terminus of the alpha chain, which is derived from the carboxyl end of the proenzyme. The post-translation cleavage follows an unusual pathway, termed non-hydrolytic serinolysis, in which the side chain hydroxyl group of the serine supplies its oxygen atom to form the C-terminus of the beta chain, while the remainder of the serine residue undergoes an oxidative deamination to produce ammonia and the pyruvoyl group blocking the N-terminus of the alpha chain.

The enzyme catalyses S-adenosyl-L-methionine + H(+) = S-adenosyl 3-(methylsulfanyl)propylamine + CO2. It functions in the pathway amine and polyamine biosynthesis; S-adenosylmethioninamine biosynthesis; S-adenosylmethioninamine from S-adenosyl-L-methionine: step 1/1. Its function is as follows. Catalyzes the decarboxylation of S-adenosylmethionine to S-adenosylmethioninamine (dcAdoMet), the propylamine donor required for the synthesis of the polyamines spermine and spermidine from the diamine putrescine. The sequence is that of S-adenosylmethionine decarboxylase proenzyme from Carboxydothermus hydrogenoformans (strain ATCC BAA-161 / DSM 6008 / Z-2901).